The following is a 311-amino-acid chain: Formimidoylglutamase (311 aa).

Residues histidine 122, aspartate 151, histidine 153, aspartate 155, cysteine 242, and aspartate 244 each coordinate Mn(2+).

The protein belongs to the arginase family. As to quaternary structure, homodimer. The cofactor is Mn(2+).

It catalyses the reaction N-formimidoyl-L-glutamate + H2O = formamide + L-glutamate. Its pathway is amino-acid degradation; L-histidine degradation into L-glutamate; L-glutamate from N-formimidoyl-L-glutamate (hydrolase route): step 1/1. Functionally, catalyzes the conversion of N-formimidoyl-L-glutamate to L-glutamate and formamide. The chain is Formimidoylglutamase from Pseudomonas aeruginosa (strain ATCC 15692 / DSM 22644 / CIP 104116 / JCM 14847 / LMG 12228 / 1C / PRS 101 / PAO1).